A 471-amino-acid chain; its full sequence is NADH-quinone oxidoreductase subunit N 1 (471 aa).

The next 14 helical transmembrane spans lie at 11 to 31 (ALVPEITLLVSAVTGLLAGAW), 39 to 59 (TIHVLAALATVVGLVATALAA), 81 to 101 (AIVLVAVLALIALSRDTVAGH), 105 to 125 (TEFVVLLQLGALGSIALAGAG), 127 to 147 (LIMLFAAFLLASVPFYALAGW), 162 to 182 (LAGALAGVTTAAGVTILFGVA), 200 to 220 (AAAAVGLIAVLAGLAFKAGAV), 234 to 254 (PPPVAAALTTVPKIGALVAFY), 270 to 290 (LITAVLATAGMTLGNLAAFAQ), 296 to 316 (MLGYSTVSQVGYLLMAVAVAG), 324 to 344 (ALLLYLAAYALTNIAGFAVVA), 365 to 385 (ALALTVALLGLVGTPPTAVFV), 398 to 418 (GLAWLVVIAALNTLASLFYYL), and 444 to 464 (AVALTTAALTLLLGIGSGIVL).

The protein belongs to the complex I subunit 2 family. In terms of assembly, NDH-1 is composed of 14 different subunits. Subunits NuoA, H, J, K, L, M, N constitute the membrane sector of the complex.

It is found in the cell membrane. It catalyses the reaction a quinone + NADH + 5 H(+)(in) = a quinol + NAD(+) + 4 H(+)(out). NDH-1 shuttles electrons from NADH, via FMN and iron-sulfur (Fe-S) centers, to quinones in the respiratory chain. The immediate electron acceptor for the enzyme in this species is believed to be a menaquinone. Couples the redox reaction to proton translocation (for every two electrons transferred, four hydrogen ions are translocated across the cytoplasmic membrane), and thus conserves the redox energy in a proton gradient. This Streptomyces griseus subsp. griseus (strain JCM 4626 / CBS 651.72 / NBRC 13350 / KCC S-0626 / ISP 5235) protein is NADH-quinone oxidoreductase subunit N 1.